Here is a 116-residue protein sequence, read N- to C-terminus: Insulin (116 aa).

The signal sequence occupies residues 1–24 (MAALWLQSFSLLVLLVVSWPGSQA). Cystine bridges form between Cys-32–Cys-102, Cys-44–Cys-115, and Cys-101–Cys-106. A propeptide spans 56–93 (DVDQLLGFLPPKSGGAAAAGADNEVAEFAFKDQMEMMV) (c peptide).

It belongs to the insulin family. Heterodimer of a B chain and an A chain linked by two disulfide bonds.

The protein resides in the secreted. Its function is as follows. Insulin decreases blood glucose concentration. It increases cell permeability to monosaccharides, amino acids and fatty acids. It accelerates glycolysis, the pentose phosphate cycle, and glycogen synthesis in liver. This Lophius americanus (American angler) protein is Insulin (ins).